The primary structure comprises 361 residues: Spermidine/putrescine import ATP-binding protein PotA (361 aa).

The region spanning 7–241 (IEVRNVSKRY…PQHRFVAQFI (235 aa)) is the ABC transporter domain. 43–50 (GPSGCGKT) lines the ATP pocket.

It belongs to the ABC transporter superfamily. Spermidine/putrescine importer (TC 3.A.1.11.1) family. In terms of assembly, the complex is composed of two ATP-binding proteins (PotA), two transmembrane proteins (PotB and PotC) and a solute-binding protein (PotD).

The protein resides in the cell inner membrane. It carries out the reaction ATP + H2O + polyamine-[polyamine-binding protein]Side 1 = ADP + phosphate + polyamineSide 2 + [polyamine-binding protein]Side 1.. Functionally, part of the ABC transporter complex PotABCD involved in spermidine/putrescine import. Responsible for energy coupling to the transport system. The protein is Spermidine/putrescine import ATP-binding protein PotA of Pseudomonas fluorescens (strain Pf0-1).